A 117-amino-acid chain; its full sequence is Ubiquitin-like protein pmt3/smt3 (117 aa).

A disordered region spans residues methionine 1–asparagine 37. Positions isoleucine 17–lysine 30 are enriched in polar residues. In terms of domain architecture, Ubiquitin-like spans histidine 35–leucine 115. Glycine 111 is covalently cross-linked (Glycyl lysine isopeptide (Gly-Lys) (interchain with K-? in acceptor proteins)). The propeptide occupies cysteine 112–leucine 117.

Belongs to the ubiquitin family. SUMO subfamily. Interacts with rfp1.

It is found in the nucleus. Required for chromosome segregation where it may be involved in microtubule assembly. Loss of smt3 leads to an increase in telomere length. The protein is Ubiquitin-like protein pmt3/smt3 (pmt3) of Schizosaccharomyces pombe (strain 972 / ATCC 24843) (Fission yeast).